A 565-amino-acid polypeptide reads, in one-letter code: NAD-dependent malic enzyme (565 aa).

Tyr-104 functions as the Proton donor in the catalytic mechanism. Arg-157 serves as a coordination point for NAD(+). Lys-175 (proton acceptor) is an active-site residue. 3 residues coordinate a divalent metal cation: Glu-246, Asp-247, and Asp-270. NAD(+) is bound by residues Asp-270 and Asn-418.

Belongs to the malic enzymes family. As to quaternary structure, homotetramer. Mg(2+) is required as a cofactor. Requires Mn(2+) as cofactor.

It catalyses the reaction (S)-malate + NAD(+) = pyruvate + CO2 + NADH. The catalysed reaction is oxaloacetate + H(+) = pyruvate + CO2. The sequence is that of NAD-dependent malic enzyme from Sodalis glossinidius (strain morsitans).